We begin with the raw amino-acid sequence, 361 residues long: Phosphoserine aminotransferase (361 aa).

L-glutamate is bound at residue arginine 43. Pyridoxal 5'-phosphate contacts are provided by residues 77–78, tryptophan 103, threonine 153, aspartate 173, and glutamine 196; that span reads AS. N6-(pyridoxal phosphate)lysine is present on lysine 197. 238–239 provides a ligand contact to pyridoxal 5'-phosphate; that stretch reads NT.

This sequence belongs to the class-V pyridoxal-phosphate-dependent aminotransferase family. SerC subfamily. Homodimer. Requires pyridoxal 5'-phosphate as cofactor.

It localises to the cytoplasm. The enzyme catalyses O-phospho-L-serine + 2-oxoglutarate = 3-phosphooxypyruvate + L-glutamate. The catalysed reaction is 4-(phosphooxy)-L-threonine + 2-oxoglutarate = (R)-3-hydroxy-2-oxo-4-phosphooxybutanoate + L-glutamate. It participates in amino-acid biosynthesis; L-serine biosynthesis; L-serine from 3-phospho-D-glycerate: step 2/3. It functions in the pathway cofactor biosynthesis; pyridoxine 5'-phosphate biosynthesis; pyridoxine 5'-phosphate from D-erythrose 4-phosphate: step 3/5. Catalyzes the reversible conversion of 3-phosphohydroxypyruvate to phosphoserine and of 3-hydroxy-2-oxo-4-phosphonooxybutanoate to phosphohydroxythreonine. The chain is Phosphoserine aminotransferase from Pseudomonas aeruginosa (strain ATCC 15692 / DSM 22644 / CIP 104116 / JCM 14847 / LMG 12228 / 1C / PRS 101 / PAO1).